Consider the following 178-residue polypeptide: MNAPADTTRLGYFLGPHGVQGGVKVYVLGDPQQLLALPRVWVEGQGWLRVRRTEALAPGAVLHLAGITSREAAEALRGLNVYAADADLPPLEEGSYYYHELRGLPVRDANGQPLGEVRDVWDSGHQDLLVVSHAGGEAFLPLQAPYVLVQTGESGRPQAIALTADAPAGLLGEGAEEA.

Residues 93–170 enclose the PRC barrel domain; sequence EGSYYYHELR…ALTADAPAGL (78 aa).

Belongs to the RimM family. As to quaternary structure, binds ribosomal protein uS19.

It localises to the cytoplasm. Functionally, an accessory protein needed during the final step in the assembly of 30S ribosomal subunit, possibly for assembly of the head region. Essential for efficient processing of 16S rRNA. May be needed both before and after RbfA during the maturation of 16S rRNA. It has affinity for free ribosomal 30S subunits but not for 70S ribosomes. The sequence is that of Ribosome maturation factor RimM from Deinococcus geothermalis (strain DSM 11300 / CIP 105573 / AG-3a).